Reading from the N-terminus, the 479-residue chain is FAD-dependent monooxygenase atmM (479 aa).

A helical membrane pass occupies residues 10–30; the sequence is IIVGGSVAGLTLAHCLQRAGI. FAD-binding residues include E36, G50, R109, D309, and A322. Residues 445–465 traverse the membrane as a helical segment; that stretch reads WILVLLVIVVSFGLHSPELVI.

The protein belongs to the paxM FAD-dependent monooxygenase family. It depends on FAD as a cofactor.

The protein localises to the membrane. It functions in the pathway secondary metabolite biosynthesis. Functionally, FAD-dependent monooxygenase; part of the ATM1 gene cluster that mediates the biosynthesis of aflatrem, a tremorgenic mycotoxin with acute neurotoxic effects. Synthesis of geranylgeranyl diphosphate (GGPP) by AtmG (a GGPP synthase) precedes condensation of GGPP with indole 3-glycerol phosphate, followed by epoxidation and cyclization by AtmM (a FAD-dependent monooxygenase) and AtmC (a prenyltransferase) to produce paspaline. AtmB is also essential for paspaline production, but its exact role has not been identified yet. AtmP, a cytochrome P450 monooxygenase, subsequently converts paspaline to 13-desoxypaxilline via PC-M6 by removal of the C-30 methyl group and oxidation at C-10. AtmQ, a cytochrome P450 monooxygenase, then catalyzes the oxidation of 13-desoxypaxilline, first at C-7 to produce paspalicine and then at C-13 to form paspalinine. Finally, AtmD prenylates paspalinine to form aflatrem. This chain is FAD-dependent monooxygenase atmM, found in Aspergillus flavus.